The chain runs to 646 residues: MAPGQRLVLCEETVRERSGLGPHRDLAELRSLSIPGTYQEKITHLGNSLMHLTALKSLDLSRNSLVSLEGIQYLVSLESLNLYYNCISSLAEVFRLHTLLELQDVDFRLNPVVKNESDYRLFVVHMLPKLRQLDDRPVRESERKASQLHFAPEDSLNSKENFSTTLTVGRPHHLRNRCTETSAKKCLVMDADDEAVLNLIAECEWDLSNPPGNMSSSQKEHEADLHYAQESRHLLSPLSIQHQCGDSARRGHEKKKVTSRGCPGHSPQDQLCGELPLQHGLPEACHMHVQHARITSQPDSVDVEDCASSAQKSSLSSQKTVNPLPVPEKYRKRRMPGGRFQVPSDRECLSFLERADGPSSLEDSLSRQDGLEGQSQVALSHSEALEAEERTSHGTSDPRVLSPKLCSAAVPERRSTLEVALLEALLDLIDRCSSGSGSLHGNEAFLAQAKHVLSSLQEFTATRDSSALEKEGIGYLSLENKTLQSRLAEQQQQYTATVTKMTAELNNTKRELDTLRQHLDKSLEENSHLKSLLYNVKKEVKTADTSTALTLQITGLQASMKQLSGEVVELKQHVEHYDKIQELTQMLQESHSSLVSTNEHLLQELSRTRAQHRAEVEQMRWSFQEFKKTTALIPHRSSRRGGRQSC.

3 LRR repeats span residues 28–49 (ELRS…GNSL), 54–75 (ALKS…QYLV), and 76–97 (SLES…FRLH). Residues 110–149 (NPVVKNESDYRLFVVHMLPKLRQLDDRPVRESERKASQLH) enclose the LRRCT domain. Residues Ser-117 and Ser-236 each carry the phosphoserine modification. Disordered regions lie at residues 300-342 (SVDV…RFQV) and 357-399 (GPSS…SDPR). A compositionally biased stretch (low complexity) spans 307–319 (ASSAQKSSLSSQK). A Phosphoserine modification is found at Ser-380. Residues 383 to 392 (EALEAEERTS) are compositionally biased toward basic and acidic residues. A Phosphoserine modification is found at Ser-402. A coiled-coil region spans residues 476–622 (LSLENKTLQS…RAEVEQMRWS (147 aa)).

The protein belongs to the CEP72 family. In terms of assembly, interacts with KIZ, PCM1 and CDK5RAP2.

The protein resides in the cytoplasm. The protein localises to the cytoskeleton. It localises to the microtubule organizing center. It is found in the centrosome. Its subcellular location is the centriolar satellite. Involved in the recruitment of key centrosomal proteins to the centrosome. Provides centrosomal microtubule-nucleation activity on the gamma-tubulin ring complexes (gamma-TuRCs) and has critical roles in forming a focused bipolar spindle, which is needed for proper tension generation between sister chromatids. Required for localization of KIZ, AKAP9 and gamma-tubulin ring complexes (gamma-TuRCs). Involved in centriole duplication. Required for CDK5RAP22, CEP152, WDR62 and CEP63 centrosomal localization and promotes the centrosomal localization of CDK2. The polypeptide is Centrosomal protein of 72 kDa (Cep72) (Mus musculus (Mouse)).